The primary structure comprises 314 residues: Electron transfer flavoprotein subunit alpha (314 aa).

253-281 contacts FAD; sequence LYVAVGISGAIQHLAGMKDSKVIVAINKD.

Belongs to the ETF alpha-subunit/FixB family. As to quaternary structure, heterodimer of an alpha and a beta subunit. It depends on FAD as a cofactor.

In terms of biological role, the electron transfer flavoprotein serves as a specific electron acceptor for other dehydrogenases. It transfers the electrons to the main respiratory chain via ETF-ubiquinone oxidoreductase (ETF dehydrogenase). This Bradyrhizobium diazoefficiens (strain JCM 10833 / BCRC 13528 / IAM 13628 / NBRC 14792 / USDA 110) protein is Electron transfer flavoprotein subunit alpha (etfA).